A 295-amino-acid chain; its full sequence is Ankyrin repeat and SOCS box protein 17 (295 aa).

Residues 146–176 form an ANK repeat; sequence SGITPLFYVAQTRQSNIFKILLQYGILEREK. Residues 232-295 enclose the SOCS box domain; sequence LGRRPIISNW…RLQNYLNLEI (64 aa).

The protein belongs to the ankyrin SOCS box (ASB) family.

It participates in protein modification; protein ubiquitination. Its function is as follows. May be a substrate-recognition component of a SCF-like ECS (Elongin-Cullin-SOCS-box protein) E3 ubiquitin-protein ligase complex which mediates the ubiquitination and subsequent proteasomal degradation of target proteins. The chain is Ankyrin repeat and SOCS box protein 17 (ASB17) from Macaca fascicularis (Crab-eating macaque).